Reading from the N-terminus, the 526-residue chain is Methane monooxygenase component A alpha chain (526 aa).

Fe cation-binding residues include E114, E144, and H147. C151 is an active-site residue. Fe cation-binding residues include E209, E243, and H246.

The protein belongs to the TmoA/XamoA family. In terms of assembly, m.trichosporium has two forms of methane monooxygenase, a soluble and a membrane-bound type. The soluble type consists of four components (A to D): protein A, comprising three chains, in an alpha-2, beta-2, gamma-2 configuration, is a nonheme iron protein containing an unusual mu-hydroxo bridge structure at its active site and interacts with both oxygen and methane. It depends on Fe cation as a cofactor.

It carries out the reaction methane + NADH + O2 + H(+) = methanol + NAD(+) + H2O. The enzyme catalyses methane + NADPH + O2 + H(+) = methanol + NADP(+) + H2O. Functionally, responsible for the initial oxygenation of methane to methanol in methanotrophs. It also catalyzes the monohydroxylation of a variety of unactivated alkenes, alicyclic, aromatic and heterocyclic compounds. The chain is Methane monooxygenase component A alpha chain (mmoX) from Methylosinus trichosporium.